Consider the following 579-residue polypeptide: Acetolactate synthase (579 aa).

Glu-61 serves as a coordination point for thiamine diphosphate. FAD-binding positions include Arg-163, 274 to 295 (HGTA…VGVR), and 317 to 336 (DIDP…IVGD). The interval 408–487 (QHQMWAGQFV…VKVIILNNGW (80 aa)) is thiamine pyrophosphate binding. Mg(2+) is bound by residues Asp-458 and Asn-485.

This sequence belongs to the TPP enzyme family. The cofactor is Mg(2+). It depends on thiamine diphosphate as a cofactor.

It catalyses the reaction 2 pyruvate + H(+) = (2S)-2-acetolactate + CO2. The protein operates within amino-acid biosynthesis; L-isoleucine biosynthesis; L-isoleucine from 2-oxobutanoate: step 1/4. It participates in amino-acid biosynthesis; L-valine biosynthesis; L-valine from pyruvate: step 1/4. The protein is Acetolactate synthase (ilvY) of Arthrospira platensis (Spirulina platensis).